Here is a 331-residue protein sequence, read N- to C-terminus: Lipoyl synthase (331 aa).

Residues C74, C79, C85, C100, C104, C107, and S314 each contribute to the [4Fe-4S] cluster site. A Radical SAM core domain is found at 85 to 303 (CFGKGTATFM…ETEAYKMGFT (219 aa)).

It belongs to the radical SAM superfamily. Lipoyl synthase family. [4Fe-4S] cluster is required as a cofactor.

It localises to the cytoplasm. The catalysed reaction is [[Fe-S] cluster scaffold protein carrying a second [4Fe-4S](2+) cluster] + N(6)-octanoyl-L-lysyl-[protein] + 2 oxidized [2Fe-2S]-[ferredoxin] + 2 S-adenosyl-L-methionine + 4 H(+) = [[Fe-S] cluster scaffold protein] + N(6)-[(R)-dihydrolipoyl]-L-lysyl-[protein] + 4 Fe(3+) + 2 hydrogen sulfide + 2 5'-deoxyadenosine + 2 L-methionine + 2 reduced [2Fe-2S]-[ferredoxin]. The protein operates within protein modification; protein lipoylation via endogenous pathway; protein N(6)-(lipoyl)lysine from octanoyl-[acyl-carrier-protein]: step 2/2. Its function is as follows. Catalyzes the radical-mediated insertion of two sulfur atoms into the C-6 and C-8 positions of the octanoyl moiety bound to the lipoyl domains of lipoate-dependent enzymes, thereby converting the octanoylated domains into lipoylated derivatives. This Leptothrix cholodnii (strain ATCC 51168 / LMG 8142 / SP-6) (Leptothrix discophora (strain SP-6)) protein is Lipoyl synthase.